The chain runs to 1600 residues: A disintegrin and metalloproteinase with thrombospondin motifs 12 (1600 aa).

Residues 1–25 form the signal peptide; the sequence is MPCARGSWLAKLSIVAQLINFGAFC. Positions 26–244 are excised as a propeptide; sequence HGRQTQPWPV…TLRSRSLSRR (219 aa). The N-linked (GlcNAc...) asparagine glycan is linked to Asn-105. The Cysteine switch motif lies at 210–217; it reads PICGLKDS. Cys-212 serves as a coordination point for Zn(2+). The 211-residue stretch at 250 to 460 folds into the Peptidase M12B domain; that stretch reads RWVETLVVAD…GRGFCLDDIP (211 aa). Intrachain disulfides connect Cys-326/Cys-380, Cys-355/Cys-362, Cys-374/Cys-455, Cys-413/Cys-439, Cys-482/Cys-505, Cys-493/Cys-511, Cys-500/Cys-530, Cys-524/Cys-535, Cys-558/Cys-595, Cys-562/Cys-600, and Cys-573/Cys-585. His-396 lines the Zn(2+) pocket. The active site involves Glu-397. Zn(2+) is bound by residues His-400 and His-406. The 80-residue stretch at 469 to 548 folds into the Disintegrin domain; that stretch reads VIAPGVIYDV…GKKPESIPGG (80 aa). TSP type-1 domains are found at residues 546–601, 827–887, 891–947, and 948–1001; these read PGGW…HPCR, KLLY…KDCP, WAGE…RDIL, and CPSD…QQCP. Positions 705-831 are spacer 1; the sequence is CQTVKKLFRQ…DNDVEKLLYF (127 aa). Residues 1001–1321 form a spacer 2 region; sequence PFSRRVLKPN…HLMKDHSPAY (321 aa). Disordered stretches follow at residues 1006–1140 and 1158–1179; these read VLKP…LSSS and PEVE…KDKS. Positions 1038–1047 are enriched in low complexity; sequence PTPLSTPTVP. A compositionally biased stretch (polar residues) spans 1048-1107; the sequence is ESMSTSTPTINSLGSTIASQEDANGMGWQNNSTQAEEGSHFPTSSGSTSQVPVTSWSLSI. The segment covering 1130-1140 has biased composition (low complexity); the sequence is TTTSDSGLSSS. TSP type-1 domains lie at 1318-1371, 1373-1428, 1429-1477, and 1478-1538; these read SPAY…RPCA, WRVG…CNLE, PCGE…NRHL, and CCHW…QACR. A PLAC domain is found at 1541 to 1581; sequence ADLTCLKDRLSISFCQTLKSMRKCSVPSVRAQCCLSCPQAP.

In terms of assembly, interacts with COMP. Zn(2+) serves as cofactor. Post-translationally, the precursor is cleaved by a furin endopeptidase. In terms of processing, subjected to an intracellular maturation process yielding a 120 kDa N-terminal fragment containing the metalloproteinase, disintegrin, one TSP type-1 and the Cys-rich domains and a 83 kDa C-terminal fragment containing the spacer 2 and four TSP type-1 domains. Glycosylated. Can be O-fucosylated by POFUT2 on a serine or a threonine residue found within the consensus sequence C1-X(2)-(S/T)-C2-G of the TSP type-1 repeat domains where C1 and C2 are the first and second cysteine residue of the repeat, respectively. Fucosylated repeats can then be further glycosylated by the addition of a beta-1,3-glucose residue by the glucosyltransferase, B3GALTL. Fucosylation mediates the efficient secretion of ADAMTS family members. Can also be C-glycosylated with one or two mannose molecules on tryptophan residues within the consensus sequence W-X-X-W of the TPRs, and N-glycosylated. These other glycosylations can also facilitate secretion.

The protein resides in the secreted. It localises to the extracellular space. The protein localises to the extracellular matrix. Inhibited by alpha-2 macroglobulin. Functionally, metalloprotease that plays a role in the degradation of COMP. Also cleaves alpha-2 macroglobulin and aggregan. Has anti-tumorigenic properties. The protein is A disintegrin and metalloproteinase with thrombospondin motifs 12 (Adamts12) of Mus musculus (Mouse).